A 401-amino-acid polypeptide reads, in one-letter code: Chaperone protein DnaJ (401 aa).

One can recognise a J domain in the interval 4 to 69; that stretch reads DYYEVLGVSR…DKRRRYDQFG (66 aa). The CR-type zinc-finger motif lies at 156 to 237; that stretch reads GVEKTLKIKK…CYGEGIKQGD (82 aa). Zn(2+) contacts are provided by Cys169, Cys172, Cys185, Cys188, Cys211, Cys214, Cys225, and Cys228. 4 CXXCXGXG motif repeats span residues 169-176, 185-192, 211-218, and 225-232; these read CKECNGSG, CQTCHGSG, CPTCGGEG, and CTACYGEG. The disordered stretch occupies residues 377 to 401; that stretch reads AFSPSGSNNDKEEKSFFEKARDIFS. Positions 385–401 are enriched in basic and acidic residues; sequence NDKEEKSFFEKARDIFS.

This sequence belongs to the DnaJ family. Homodimer. Requires Zn(2+) as cofactor.

Its subcellular location is the cytoplasm. Its function is as follows. Participates actively in the response to hyperosmotic and heat shock by preventing the aggregation of stress-denatured proteins and by disaggregating proteins, also in an autonomous, DnaK-independent fashion. Unfolded proteins bind initially to DnaJ; upon interaction with the DnaJ-bound protein, DnaK hydrolyzes its bound ATP, resulting in the formation of a stable complex. GrpE releases ADP from DnaK; ATP binding to DnaK triggers the release of the substrate protein, thus completing the reaction cycle. Several rounds of ATP-dependent interactions between DnaJ, DnaK and GrpE are required for fully efficient folding. Also involved, together with DnaK and GrpE, in the DNA replication of plasmids through activation of initiation proteins. The chain is Chaperone protein DnaJ from Chlorobium limicola (strain DSM 245 / NBRC 103803 / 6330).